We begin with the raw amino-acid sequence, 140 residues long: 3-hydroxyacyl-[acyl-carrier-protein] dehydratase FabZ (140 aa).

H47 is a catalytic residue.

The protein belongs to the thioester dehydratase family. FabZ subfamily.

The protein resides in the cytoplasm. It carries out the reaction a (3R)-hydroxyacyl-[ACP] = a (2E)-enoyl-[ACP] + H2O. Involved in unsaturated fatty acids biosynthesis. Catalyzes the dehydration of short chain beta-hydroxyacyl-ACPs and long chain saturated and unsaturated beta-hydroxyacyl-ACPs. This is 3-hydroxyacyl-[acyl-carrier-protein] dehydratase FabZ from Streptococcus mutans serotype c (strain ATCC 700610 / UA159).